The primary structure comprises 563 residues: DNA mismatch repair protein MutL (563 aa).

Belongs to the DNA mismatch repair MutL/HexB family.

This protein is involved in the repair of mismatches in DNA. It is required for dam-dependent methyl-directed DNA mismatch repair. May act as a 'molecular matchmaker', a protein that promotes the formation of a stable complex between two or more DNA-binding proteins in an ATP-dependent manner without itself being part of a final effector complex. The sequence is that of DNA mismatch repair protein MutL from Trichormus variabilis (strain ATCC 29413 / PCC 7937) (Anabaena variabilis).